The chain runs to 259 residues: MICRFIDTHCHFDFPPFSGDEEASLQRAAQAGVGKIIVPATEAENFARVLALAENYQPLYAALGLHPGMLEKHSDVSLEQLQQALERRPAKVVAVGEIGLDLFGDDPQFERQQWLLDEQLKLAKRYDLPVILHSRRTHDKLAMHLKRHDLPRTGVVHGFSGSLQQAERFVQLGYKIGVGGTITYPRASKTRDVIAKLPLASLLLETDAPDMPLNGFQGQPNRPEQAARVFAVLCELRREPADEIAQALLNNTYTLFNVP.

H9, H11, E97, H133, H157, and D207 together coordinate a divalent metal cation.

Belongs to the metallo-dependent hydrolases superfamily. TatD-type hydrolase family. A divalent metal cation serves as cofactor.

This is an uncharacterized protein from Escherichia coli (strain K12).